Consider the following 257-residue polypeptide: Diphthine synthase (257 aa).

S-adenosyl-L-methionine contacts are provided by residues Ile11, Asp89, Ile92, 117-118 (SV), Leu169, Leu210, and His235.

Belongs to the diphthine synthase family. In terms of assembly, homodimer.

The enzyme catalyses 2-[(3S)-amino-3-carboxypropyl]-L-histidyl-[translation elongation factor 2] + 3 S-adenosyl-L-methionine = diphthine-[translation elongation factor 2] + 3 S-adenosyl-L-homocysteine + 3 H(+). It participates in protein modification; peptidyl-diphthamide biosynthesis. S-adenosyl-L-methionine-dependent methyltransferase that catalyzes the trimethylation of the amino group of the modified target histidine residue in translation elongation factor 2 (EF-2), to form an intermediate called diphthine. The three successive methylation reactions represent the second step of diphthamide biosynthesis. This chain is Diphthine synthase, found in Saccharolobus islandicus (strain L.S.2.15 / Lassen #1) (Sulfolobus islandicus).